The chain runs to 107 residues: High mobility group protein HMG-I/HMG-Y (107 aa).

The segment covering 1–13 (MSESGSKSSQPLA) has biased composition (polar residues). The tract at residues 1–107 (MSESGSKSSQ…ISQESSEEEQ (107 aa)) is disordered. Ser-2 carries the post-translational modification N-acetylserine. N6-acetyllysine is present on Lys-7. At Ser-8 the chain carries ADP-ribosylserine. Residue Ser-9 is modified to ADP-ribosylserine; alternate. Ser-9 is modified (phosphoserine; alternate). Lys-15 is modified (N6-acetyllysine; alternate). Residue Lys-15 forms a Glycyl lysine isopeptide (Lys-Gly) (interchain with G-Cter in SUMO2); alternate linkage. The span at 15–24 (KQEKDGTEKR) shows a compositional bias: basic and acidic residues. Positions 21-31 (TEKRGRGRPRK) form a DNA-binding region, a.T hook 1. Arg-26 carries the post-translational modification Asymmetric dimethylarginine; alternate. An Omega-N-methylarginine; alternate modification is found at Arg-26. Arg-26 bears the Symmetric dimethylarginine; alternate mark. Ser-36 carries the post-translational modification Phosphoserine; by HIPK2 and CDC2. Thr-39 is modified (phosphothreonine). Residues Ser-44 and Ser-49 each carry the phosphoserine modification. At Thr-53 the chain carries Phosphothreonine; by HIPK2 and CDC2. 2 consecutive DNA-binding regions (a.T hook) follow at residues 53-63 (TPKRPRGRPKG) and 78-89 (APGRKPRGRPKK). Positions 53 to 77 (TPKRPRGRPKGSKNKGAAKTRKVTT) are interaction with HIPK2. Basic residues predominate over residues 55 to 74 (KRPRGRPKGSKNKGAAKTRK). Residues Arg-58 and Arg-60 each carry the asymmetric dimethylarginine; by PRMT6; alternate modification. Arg-58 and Arg-60 each carry omega-N-methylarginine; by PRMT6; alternate. Residues 93–107 (EEEEGISQESSEEEQ) are compositionally biased toward acidic residues. Ser-99, Ser-102, and Ser-103 each carry phosphoserine.

It belongs to the HMGA family. Interacts with HIPK2. In terms of processing, isoforms HMG-I and HMG-Y can be phosphorylated by HIPK2. Phosphorylation may modulate DNA-binding affinity. Methylation at Arg-58 is mutually exclusive with methylation at Arg-60.

It localises to the nucleus. The protein resides in the chromosome. HMG-I/Y bind preferentially to the minor groove of A+T rich regions in double-stranded DNA. It is suggested that these proteins could function in nucleosome phasing and in the 3'-end processing of mRNA transcripts. They are also involved in the transcription regulation of genes containing, or in close proximity to A+T-rich regions. This is High mobility group protein HMG-I/HMG-Y (Hmga1) from Mus musculus (Mouse).